The chain runs to 489 residues: Rhamnulokinase (489 aa).

Residue 13 to 17 (ASSGR) coordinates ATP. A disulfide bond links C68 and C222. Substrate-binding positions include G83 and 236–238 (HDT). The active-site Proton acceptor is D237. T259 is an ATP binding site. N296 contributes to the substrate binding site. Q304 is an ATP binding site. A disulfide bond links C353 and C370. G402 contributes to the ATP binding site. A disulfide bridge links C413 with C417.

Belongs to the rhamnulokinase family. In terms of assembly, monomer. It depends on Mg(2+) as a cofactor.

It carries out the reaction L-rhamnulose + ATP = L-rhamnulose 1-phosphate + ADP + H(+). Its pathway is carbohydrate degradation; L-rhamnose degradation; glycerone phosphate from L-rhamnose: step 2/3. Involved in the catabolism of L-rhamnose (6-deoxy-L-mannose). Catalyzes the transfer of the gamma-phosphate group from ATP to the 1-hydroxyl group of L-rhamnulose to yield L-rhamnulose 1-phosphate. The chain is Rhamnulokinase from Escherichia coli (strain K12 / DH10B).